The chain runs to 198 residues: Recombination protein RecR (198 aa).

Residues 57–72 (CSSCGHITDKDPCYIC) form a C4-type zinc finger. The Toprim domain occupies 80-175 (SIICVVQDPK…KITRIAHGLP (96 aa)).

It belongs to the RecR family.

In terms of biological role, may play a role in DNA repair. It seems to be involved in an RecBC-independent recombinational process of DNA repair. It may act with RecF and RecO. The chain is Recombination protein RecR from Anoxybacillus flavithermus (strain DSM 21510 / WK1).